An 807-amino-acid polypeptide reads, in one-letter code: Ribosome-releasing factor 2, mitochondrial (807 aa).

The N-terminal 18 residues, 1–18 (MFCRKYAFQTWKQFSRFY), are a transit peptide targeting the mitochondrion. Positions 27–315 (SKTRNIGIIA…GITKYLPSPL (289 aa)) constitute a tr-type G domain. GTP contacts are provided by residues 36 to 43 (AHIDAGKT), 100 to 104 (DTPGH), and 154 to 157 (NKMD).

The protein belongs to the TRAFAC class translation factor GTPase superfamily. Classic translation factor GTPase family. EF-G/EF-2 subfamily.

Its subcellular location is the mitochondrion. Mitochondrial GTPase that mediates the disassembly of ribosomes from messenger RNA at the termination of mitochondrial protein biosynthesis. Not involved in the GTP-dependent ribosomal translocation step during translation elongation. This Candida dubliniensis (strain CD36 / ATCC MYA-646 / CBS 7987 / NCPF 3949 / NRRL Y-17841) (Yeast) protein is Ribosome-releasing factor 2, mitochondrial.